Consider the following 353-residue polypeptide: Photosystem II protein D1 (353 aa).

T2 is subject to N-acetylthreonine. T2 bears the Phosphothreonine mark. The next 3 membrane-spanning stretches (helical) occupy residues 29-46, 118-133, and 142-156; these read YIGW…TATS, HFFL…EWEL, and WIAV…AATA. Residue H118 participates in chlorophyll a binding. A pheophytin a-binding site is contributed by Y126. [CaMn4O5] cluster-binding residues include D170 and E189. A helical transmembrane segment spans residues 197 to 218; that stretch reads FHMLGVAGVFGGSLFSAMHGSL. H198 contacts chlorophyll a. A quinone-binding positions include H215 and 264-265; that span reads SF. H215 lines the Fe cation pocket. Position 272 (H272) interacts with Fe cation. The helical transmembrane segment at 274 to 288 threads the bilayer; the sequence is FLAAWPVVGIWFTAL. Residues H332, E333, D342, and A344 each contribute to the [CaMn4O5] cluster site. The propeptide occupies 345–353; it reads SVEAPSVNG.

The protein belongs to the reaction center PufL/M/PsbA/D family. PSII is composed of 1 copy each of membrane proteins PsbA, PsbB, PsbC, PsbD, PsbE, PsbF, PsbH, PsbI, PsbJ, PsbK, PsbL, PsbM, PsbT, PsbX, PsbY, PsbZ, Psb30/Ycf12, at least 3 peripheral proteins of the oxygen-evolving complex and a large number of cofactors. It forms dimeric complexes. The cofactor is The D1/D2 heterodimer binds P680, chlorophylls that are the primary electron donor of PSII, and subsequent electron acceptors. It shares a non-heme iron and each subunit binds pheophytin, quinone, additional chlorophylls, carotenoids and lipids. D1 provides most of the ligands for the Mn4-Ca-O5 cluster of the oxygen-evolving complex (OEC). There is also a Cl(-1) ion associated with D1 and D2, which is required for oxygen evolution. The PSII complex binds additional chlorophylls, carotenoids and specific lipids.. Tyr-161 forms a radical intermediate that is referred to as redox-active TyrZ, YZ or Y-Z. Post-translationally, C-terminally processed by CTPA; processing is essential to allow assembly of the oxygen-evolving complex and thus photosynthetic growth.

The protein localises to the plastid. It is found in the chloroplast thylakoid membrane. The enzyme catalyses 2 a plastoquinone + 4 hnu + 2 H2O = 2 a plastoquinol + O2. In terms of biological role, photosystem II (PSII) is a light-driven water:plastoquinone oxidoreductase that uses light energy to abstract electrons from H(2)O, generating O(2) and a proton gradient subsequently used for ATP formation. It consists of a core antenna complex that captures photons, and an electron transfer chain that converts photonic excitation into a charge separation. The D1/D2 (PsbA/PsbD) reaction center heterodimer binds P680, the primary electron donor of PSII as well as several subsequent electron acceptors. The sequence is that of Photosystem II protein D1 from Chaetosphaeridium globosum (Charophycean green alga).